We begin with the raw amino-acid sequence, 266 residues long: Hydroxyethylthiazole kinase (266 aa).

Position 45 (methionine 45) interacts with substrate. Lysine 121 and serine 167 together coordinate ATP. Glycine 194 contributes to the substrate binding site.

This sequence belongs to the Thz kinase family. It depends on Mg(2+) as a cofactor.

The catalysed reaction is 5-(2-hydroxyethyl)-4-methylthiazole + ATP = 4-methyl-5-(2-phosphooxyethyl)-thiazole + ADP + H(+). It functions in the pathway cofactor biosynthesis; thiamine diphosphate biosynthesis; 4-methyl-5-(2-phosphoethyl)-thiazole from 5-(2-hydroxyethyl)-4-methylthiazole: step 1/1. In terms of biological role, catalyzes the phosphorylation of the hydroxyl group of 4-methyl-5-beta-hydroxyethylthiazole (THZ). This Methanocella arvoryzae (strain DSM 22066 / NBRC 105507 / MRE50) protein is Hydroxyethylthiazole kinase.